The primary structure comprises 512 residues: N-acetyltryptophan 6-hydroxylase ivoC (512 aa).

A helical transmembrane segment spans residues 6-26 (LVFSFPAWALLLVLTLLYTLY). A glycan (N-linked (GlcNAc...) asparagine) is linked at N118. C453 contacts heme.

It belongs to the cytochrome P450 family. Heme is required as a cofactor.

It is found in the membrane. It participates in pigment biosynthesis. N-acetyltryptophan 6-hydroxylase; part of the pathway that mediates the biosynthesis of the gray-brown conidiophore pigment. The first step of the pathway is performed by the nonribosomal peptide synthetase ivoA that catalyzes ATP-dependent unidirectional stereoinversion of L-tryptophan to D-tryptophan with complete conversion. While the stereoinversion is catalyzed by the epimerization (E) domain of ivoA, the terminal condensation (C) domain stereoselectively hydrolyzes D-tryptophanyl-S-phosphopantetheine thioester and thus represents a non-canonical C domain function. D-tryptophan is acetylated, probably by an endogenous acetyltransferase. N-acetyltryptophan is further 6-hydroxylated into N-acetyl-6-hydroxytryptophan (AHT) by the cytochrome P450 monooxygenase ivoC. N-acetyl-6-hydroxytryptophan is substrate of the N-acetyl-6-hydroxytryptophan oxidase ivoB to produce the gray-brown conidiophore pigment. The sequence is that of N-acetyltryptophan 6-hydroxylase ivoC from Emericella nidulans (strain FGSC A4 / ATCC 38163 / CBS 112.46 / NRRL 194 / M139) (Aspergillus nidulans).